The chain runs to 330 residues: Ribose-phosphate pyrophosphokinase (330 aa).

ATP contacts are provided by residues 40 to 42 (DGE) and 99 to 100 (RQ). Mg(2+) is bound by residues His-133 and Asp-174. The active site involves Lys-197. D-ribose 5-phosphate-binding positions include Arg-199, Asp-223, and 227 to 231 (DTGGT).

It belongs to the ribose-phosphate pyrophosphokinase family. Class I subfamily. In terms of assembly, homohexamer. Requires Mg(2+) as cofactor.

The protein resides in the cytoplasm. It catalyses the reaction D-ribose 5-phosphate + ATP = 5-phospho-alpha-D-ribose 1-diphosphate + AMP + H(+). Its pathway is metabolic intermediate biosynthesis; 5-phospho-alpha-D-ribose 1-diphosphate biosynthesis; 5-phospho-alpha-D-ribose 1-diphosphate from D-ribose 5-phosphate (route I): step 1/1. Its function is as follows. Involved in the biosynthesis of the central metabolite phospho-alpha-D-ribosyl-1-pyrophosphate (PRPP) via the transfer of pyrophosphoryl group from ATP to 1-hydroxyl of ribose-5-phosphate (Rib-5-P). The sequence is that of Ribose-phosphate pyrophosphokinase from Ureaplasma parvum serovar 3 (strain ATCC 700970).